We begin with the raw amino-acid sequence, 79 residues long: MORN repeat-containing protein 2 (79 aa).

MORN repeat units follow at residues 15-36 (YEGQFKDNMFHGLGTYTFPNGA) and 38-55 (YTGNFNENRVEGEGEYTD).

The protein resides in the cytoplasmic vesicle. It localises to the secretory vesicle. Its subcellular location is the acrosome. The protein localises to the nucleus. Functionally, might have a role in spermatogenesis. This Homo sapiens (Human) protein is MORN repeat-containing protein 2.